Reading from the N-terminus, the 329-residue chain is MNAAISATARYLPEGVLSNLDLERMLDTNDEWIRSRTGISERRILRDPKKATSYMCGEVASQLLRKRGLAAEELELIIVATMTPDMMFPSTACLVQDIIGAKNAWAFDINAACSGFLYALNTASQFIKAGTHKNVMVIGGDKMSSIIDYTDRSTAILFGDGAGGVILEAAESEGFGVLDARMYSDGTNGKDHLLMKGGGSLHPATHDTVDQHLHYIYQDGRMVFKSAVTSMADVAAEIMERNGLTSDDVSWLVPHQANQRIISATAERMGIDESKVISNVGRYGNTTAGTIPICLSELDDGGHLEHGSNLVLVSFGAGYTWGGVYVKWQ.

Active-site residues include Cys113 and His255. The ACP-binding stretch occupies residues 256-260; the sequence is QANQR. Asn285 is an active-site residue.

The protein belongs to the thiolase-like superfamily. FabH family. As to quaternary structure, homodimer.

It localises to the cytoplasm. It carries out the reaction malonyl-[ACP] + acetyl-CoA + H(+) = 3-oxobutanoyl-[ACP] + CO2 + CoA. It participates in lipid metabolism; fatty acid biosynthesis. Catalyzes the condensation reaction of fatty acid synthesis by the addition to an acyl acceptor of two carbons from malonyl-ACP. Catalyzes the first condensation reaction which initiates fatty acid synthesis and may therefore play a role in governing the total rate of fatty acid production. Possesses both acetoacetyl-ACP synthase and acetyl transacylase activities. Its substrate specificity determines the biosynthesis of branched-chain and/or straight-chain of fatty acids. The chain is Beta-ketoacyl-[acyl-carrier-protein] synthase III from Chlorobium luteolum (strain DSM 273 / BCRC 81028 / 2530) (Pelodictyon luteolum).